A 104-amino-acid chain; its full sequence is N(4)-acetylcytidine amidohydrolase (104 aa).

The ASCH domain maps to 7–95; sequence MTFFERFETD…IQDIYPGISQ (89 aa). Residue Lys22 is the Proton acceptor of the active site. Thr25 acts as the Nucleophile in catalysis. The Proton donor role is filled by Glu75.

Belongs to the N(4)-acetylcytidine amidohydrolase family.

The catalysed reaction is N(4)-acetylcytidine + H2O = cytidine + acetate + H(+). It carries out the reaction N(4)-acetyl-2'-deoxycytidine + H2O = 2'-deoxycytidine + acetate + H(+). It catalyses the reaction N(4)-acetylcytosine + H2O = cytosine + acetate + H(+). In terms of biological role, catalyzes the hydrolysis of N(4)-acetylcytidine (ac4C). The chain is N(4)-acetylcytidine amidohydrolase from Vibrio atlanticus (strain LGP32) (Vibrio splendidus (strain Mel32)).